We begin with the raw amino-acid sequence, 565 residues long: Urocanate hydratase (565 aa).

NAD(+) contacts are provided by residues 58–59 (GG), Gln-136, 182–184 (GMG), Glu-202, Arg-207, 245–246 (NA), 266–270 (QTSAH), 276–277 (YL), and Tyr-325. Residue Cys-413 is part of the active site. Position 495 (Gly-495) interacts with NAD(+).

Belongs to the urocanase family. It depends on NAD(+) as a cofactor.

The protein resides in the cytoplasm. It carries out the reaction 4-imidazolone-5-propanoate = trans-urocanate + H2O. Its pathway is amino-acid degradation; L-histidine degradation into L-glutamate; N-formimidoyl-L-glutamate from L-histidine: step 2/3. Catalyzes the conversion of urocanate to 4-imidazolone-5-propionate. The sequence is that of Urocanate hydratase from Vibrio cholerae serotype O1 (strain ATCC 39541 / Classical Ogawa 395 / O395).